A 264-amino-acid chain; its full sequence is Nicotinamide N-methyltransferase (264 aa).

At Arg-18 the chain carries Citrulline; alternate. Residues Tyr-20 and Tyr-25 each contribute to the S-adenosyl-L-methionine site. At Lys-39 the chain carries N6-acetyllysine. Gly-63, Tyr-69, Asp-85, and Asn-90 together coordinate S-adenosyl-L-methionine. Arg-132 bears the Citrulline; alternate mark. S-adenosyl-L-methionine-binding positions include 142–143 (DV) and Thr-163. A Citrulline; alternate modification is found at Arg-181. 2 residues coordinate nicotinamide: Asp-197 and Ser-213.

This sequence belongs to the class I-like SAM-binding methyltransferase superfamily. NNMT/PNMT/TEMT family. As to quaternary structure, monomer. Deiminated by PADI1 and PADI2. Predominantly expressed in the liver. A lower expression is seen in the kidney, lung, skeletal muscle, placenta and heart. Not detected in the brain or pancreas.

The protein localises to the cytoplasm. The catalysed reaction is nicotinamide + S-adenosyl-L-methionine = 1-methylnicotinamide + S-adenosyl-L-homocysteine. The protein operates within cofactor metabolism. Its pathway is amino-acid degradation. Inactivated by deimination on Arg-132. In terms of biological role, catalyzes the N-methylation of nicotinamide using the universal methyl donor S-adenosyl-L-methionine to form N1-methylnicotinamide and S-adenosyl-L-homocysteine, a predominant nicotinamide/vitamin B3 clearance pathway. Plays a central role in regulating cellular methylation potential, by consuming S-adenosyl-L-methionine and limiting its availability for other methyltransferases. Actively mediates genome-wide epigenetic and transcriptional changes through hypomethylation of repressive chromatin marks, such as H3K27me3. In a developmental context, contributes to low levels of the repressive histone marks that characterize pluripotent embryonic stem cell pre-implantation state. Acts as a metabolic regulator primarily on white adipose tissue energy expenditure as well as hepatic gluconeogenesis and cholesterol biosynthesis. In white adipocytes, regulates polyamine flux by consuming S-adenosyl-L-methionine which provides for propylamine group in polyamine biosynthesis, whereas by consuming nicotinamide controls NAD(+) levels through the salvage pathway. Via its product N1-methylnicotinamide regulates protein acetylation in hepatocytes, by repressing the ubiquitination and increasing the stability of SIRT1 deacetylase. Can also N-methylate other pyridines structurally related to nicotinamide and play a role in xenobiotic detoxification. The polypeptide is Nicotinamide N-methyltransferase (Homo sapiens (Human)).